Reading from the N-terminus, the 145-residue chain is Large-conductance mechanosensitive channel (145 aa).

A run of 3 helical transmembrane segments spans residues 14 to 34, 38 to 58, and 81 to 101; these read VMDL…VKSL, LIMP…YFLP, and GSFL…FLMV.

This sequence belongs to the MscL family. As to quaternary structure, homopentamer.

It localises to the cell inner membrane. Channel that opens in response to stretch forces in the membrane lipid bilayer. May participate in the regulation of osmotic pressure changes within the cell. The polypeptide is Large-conductance mechanosensitive channel (Rhizobium johnstonii (strain DSM 114642 / LMG 32736 / 3841) (Rhizobium leguminosarum bv. viciae)).